Reading from the N-terminus, the 327-residue chain is rRNA 2'-O-methyltransferase fibrillarin (327 aa).

Residues 1–96 (MGTDYRNSGR…GFKGGAKTMV (96 aa)) form a disordered region. Asymmetric dimethylarginine is present on residues R10, R19, R44, R49, R55, R65, R69, and R78. The span at 22–56 (GNDRRDSGRSFGDRRPERPDFKRGDGGRGFGDRRG) shows a compositional bias: basic and acidic residues. Residues 73–90 (DGPGGRGGPGGPGGGFKG) are compositionally biased toward gly residues. S-adenosyl-L-methionine contacts are provided by residues 181–182 (TT), 200–201 (EF), 225–226 (DA), and 245–248 (DVAQ).

Belongs to the methyltransferase superfamily. Fibrillarin family. As to quaternary structure, component of box C/D small nucleolar ribonucleoprotein (snoRNP) particles. It is associated with the U3, U8 and U13 small nuclear RNAs. In terms of processing, by homology to other fibrillarins, some or all of the N-terminal domain arginines are modified to asymmetric dimethylarginine (DMA).

Its subcellular location is the nucleus. It is found in the nucleolus. It catalyses the reaction L-glutaminyl-[histone H2A] + S-adenosyl-L-methionine = N(5)-methyl-L-glutaminyl-[histone H2A] + S-adenosyl-L-homocysteine + H(+). Its function is as follows. S-adenosyl-L-methionine-dependent methyltransferase that has the ability to methylate both RNAs and proteins. Involved in pre-rRNA processing. Utilizes the methyl donor S-adenosyl-L-methionine to catalyze the site-specific 2'-hydroxyl methylation of ribose moieties in pre-ribosomal RNA. Site specificity is provided by a guide RNA that base pairs with the substrate. Methylation occurs at a characteristic distance from the sequence involved in base pairing with the guide RNA. Also acts as a protein methyltransferase by mediating methylation of 'Gln-105' of histone H2A (H2AQ105me), a modification that impairs binding of the FACT complex and is specifically present at 35S ribosomal DNA locus. The chain is rRNA 2'-O-methyltransferase fibrillarin from Giardia intestinalis (Giardia lamblia).